The chain runs to 264 residues: Tryptophan synthase alpha chain (264 aa).

Catalysis depends on proton acceptor residues Glu-49 and Asp-60.

This sequence belongs to the TrpA family. In terms of assembly, tetramer of two alpha and two beta chains.

It carries out the reaction (1S,2R)-1-C-(indol-3-yl)glycerol 3-phosphate + L-serine = D-glyceraldehyde 3-phosphate + L-tryptophan + H2O. It participates in amino-acid biosynthesis; L-tryptophan biosynthesis; L-tryptophan from chorismate: step 5/5. Its function is as follows. The alpha subunit is responsible for the aldol cleavage of indoleglycerol phosphate to indole and glyceraldehyde 3-phosphate. The chain is Tryptophan synthase alpha chain from Geotalea daltonii (strain DSM 22248 / JCM 15807 / FRC-32) (Geobacter daltonii).